We begin with the raw amino-acid sequence, 474 residues long: Glutathione synthetase (474 aa).

Residue alanine 2 is modified to N-acetylalanine. Arginine 125 contacts substrate. ATP is bound at residue glutamate 144. Glutamate 144 and asparagine 146 together coordinate Mg(2+). Substrate contacts are provided by residues 148-151 (ISAS), 214-216 (ERN), glutamine 220, and 267-270 (RDGY). ATP contacts are provided by residues lysine 305, 364 to 373 (KPQREGGGNN), tyrosine 375, and 398 to 401 (MEKI). Glutamate 368 contacts Mg(2+). Serine 415 carries the post-translational modification Phosphoserine. Residue glutamate 425 coordinates ATP. Arginine 450 is a substrate binding site. Positions 452 and 458 each coordinate ATP. Position 461 to 462 (461 to 462 (VA)) interacts with substrate.

This sequence belongs to the eukaryotic GSH synthase family. As to quaternary structure, homodimer. It depends on Mg(2+) as a cofactor.

The enzyme catalyses gamma-L-glutamyl-L-cysteine + glycine + ATP = glutathione + ADP + phosphate + H(+). The catalysed reaction is gamma-L-glutamyl-(2S)-2-aminobutanoate + glycine + ATP = ophthalmate + ADP + phosphate + H(+). The protein operates within sulfur metabolism; glutathione biosynthesis; glutathione from L-cysteine and L-glutamate: step 2/2. Functionally, catalyzes the production of glutathione from gamma-glutamylcysteine and glycine in an ATP-dependent manner. Glutathione (gamma-glutamylcysteinylglycine, GSH) is the most abundant intracellular thiol in living aerobic cells and is required for numerous processes including the protection of cells against oxidative damage, amino acid transport, the detoxification of foreign compounds, the maintenance of protein sulfhydryl groups in a reduced state and acts as a cofactor for a number of enzymes. Participates in ophthalmate biosynthesis in hepatocytes. The polypeptide is Glutathione synthetase (Mus musculus (Mouse)).